A 261-amino-acid polypeptide reads, in one-letter code: 3beta-hydroxysteroid dehydrogenase 1 (261 aa).

Residues 65-66 (DV), Asn-92, Tyr-158, and Lys-162 each bind NAD(+). Tyr-158 (proton acceptor) is an active-site residue.

It belongs to the short-chain dehydrogenases/reductases (SDR) family.

The enzyme catalyses 3-oxo-5beta-cholan-24-oate + NADH + H(+) = isolithocholate + NAD(+). It catalyses the reaction 12alpha-hydroxy-3-oxo-5beta-cholan-24-oate + NADH + H(+) = isodeoxycholate + NAD(+). It carries out the reaction 7alpha,12alpha-dihydroxy-3-oxo-5beta-cholan-24-oate + NADH + H(+) = isocholate + NAD(+). The catalysed reaction is 3-oxochenodeoxycholate + NADH + H(+) = isochenodeoxycholate + NAD(+). Involved in the modification of secondary bile acids into iso-bile acids (3beta-bile acids) via epimerization of the 3-OH group through a 3-oxo-intermediate. Catalyzes the reduction of 12-alpha-hydroxy-3-oxo-5-beta-cholan-24-oate (3-oxo-DCA) and 3-oxo-5-beta-cholan-24-oate (3-oxo-LCA) to yield isodeoxycholate (isoDCA) and isolithocholate (isoLCA), respectively. Is also able to catalyze the reduction of 3-dehydrocholate (3-oxo-CA or 7alpha,12alpha-dihydroxy-3-oxo-5beta-cholan-24-oate) and 7-alpha-hydroxy-3-oxo-5-beta-cholan-24-oate (3-oxo-CDCA), into isocholate (isoCA) and isochenodeoxycholate (isoCDCA), respectively. Prefers NADH to NADPH as cosubstrate. The conversion of the abundant bile acid deoxycholate (DCA) into isoDCA by the gut bacterium E.lenta favors the growth of the keystone commensal genus Bacteroides, since isoDCA is less cytotoxic than its parent compound, DCA; iso-bile acids have thus a potential role in modulating gut community composition. The chain is 3beta-hydroxysteroid dehydrogenase 1 from Eggerthella lenta (strain ATCC 25559 / DSM 2243 / CCUG 17323 / JCM 9979 / KCTC 3265 / NCTC 11813 / VPI 0255 / 1899 B) (Eubacterium lentum).